Reading from the N-terminus, the 269-residue chain is MKWLLFPARIVARTRPNLFSLYRRSVSQYLRPRTIQNLQSMAQTPELKTKLFKPLVWIDCEMTGLDHVNDRIIEICCIITDGHLAPVKAADGQGDSHYESVIHYGPEVMNKMNEWCIEHHGNSGLTAKVLASEKTLAQVEDELLEYIQRYIPDKNVGVLAGNSVHMDRLFMVREFPKVIDHLFYRIVDVSSIMEVARRHNPALQARNPKKEAAHTAYSDIKESIAQLQWYMDNYLKPPQETESVESIGSEQPESPSSSTSSLKRQRTDF.

Positions 55–227 (LVWIDCEMTG…SDIKESIAQL (173 aa)) constitute an Exonuclease domain. Tyrosine 184 is a catalytic residue. The interval 240 to 269 (ETESVESIGSEQPESPSSSTSSLKRQRTDF) is disordered. Positions 245–261 (ESIGSEQPESPSSSTSS) are enriched in low complexity.

This sequence belongs to the oligoribonuclease family.

It localises to the mitochondrion. In terms of biological role, 3'-to-5' exoribonuclease specific for small oligoribonucleotides. The sequence is that of Oligoribonuclease, mitochondrial (REX2) from Saccharomyces cerevisiae (strain ATCC 204508 / S288c) (Baker's yeast).